The following is a 559-amino-acid chain: Alkaline phosphatase PhoK (559 aa).

The first 19 residues, 1 to 19 (MLKHVAAALLLATAMPVVA), serve as a signal peptide directing secretion. Positions 49 and 89 each coordinate Zn(2+). Thr-89 acts as the Phosphothreonine intermediate in catalysis. Cys-90 and Cys-126 are oxidised to a cystine. Residues Asn-110 and 171 to 173 (KDR) each bind substrate. Cys-231 and Cys-314 are joined by a disulfide. Asp-300, His-304, Asp-345, His-346, and His-491 together coordinate Zn(2+). Residues Cys-545 and Cys-556 are joined by a disulfide bond.

In terms of assembly, monomer. Requires Zn(2+) as cofactor.

It localises to the secreted. The enzyme catalyses a phosphate monoester + H2O = an alcohol + phosphate. In terms of biological role, alkaline phosphatase with broad substrate specificity. Precipitates uranium from alkaline solutions. This Sphingomonas sp protein is Alkaline phosphatase PhoK.